The primary structure comprises 83 residues: Mu-theraphotoxin-Hhn2f (83 aa).

A signal peptide spans 1–21; it reads MKASMFLALAGLVLLFVVGYA. A propeptide spanning residues 22–48 is cleaved from the precursor; it reads SESEEKEFPIELLSKIFAVDVFKGEER. Cystine bridges form between Cys50–Cys65, Cys57–Cys70, and Cys64–Cys77. Position 81 is a leucine amide (Leu81).

The protein belongs to the neurotoxin 10 (Hwtx-1) family. 15 (Hntx-3) subfamily. Monomer. In terms of tissue distribution, expressed by the venom gland.

The protein localises to the secreted. In terms of biological role, lethal neurotoxin. Selectively blocks tetrodotoxin-sensitive voltage-gated sodium channels (Nav). Does not affect tetrodotoxin-resistant voltage-gated sodium channels or calcium channels. This chain is Mu-theraphotoxin-Hhn2f, found in Cyriopagopus hainanus (Chinese bird spider).